The following is a 198-amino-acid chain: ATP synthase subunit b (198 aa).

Residues 49–67 (IWKWANFLILAGGLGYLVG) traverse the membrane as a helical segment.

This sequence belongs to the ATPase B chain family. As to quaternary structure, F-type ATPases have 2 components, F(1) - the catalytic core - and F(0) - the membrane proton channel. F(1) has five subunits: alpha(3), beta(3), gamma(1), delta(1), epsilon(1). F(0) has three main subunits: a(1), b(2) and c(10-14). The alpha and beta chains form an alternating ring which encloses part of the gamma chain. F(1) is attached to F(0) by a central stalk formed by the gamma and epsilon chains, while a peripheral stalk is formed by the delta and b chains.

Its subcellular location is the cell inner membrane. In terms of biological role, f(1)F(0) ATP synthase produces ATP from ADP in the presence of a proton or sodium gradient. F-type ATPases consist of two structural domains, F(1) containing the extramembraneous catalytic core and F(0) containing the membrane proton channel, linked together by a central stalk and a peripheral stalk. During catalysis, ATP synthesis in the catalytic domain of F(1) is coupled via a rotary mechanism of the central stalk subunits to proton translocation. Its function is as follows. Component of the F(0) channel, it forms part of the peripheral stalk, linking F(1) to F(0). The sequence is that of ATP synthase subunit b from Solibacter usitatus (strain Ellin6076).